A 134-amino-acid chain; its full sequence is Small ribosomal subunit protein uS8 (134 aa).

It belongs to the universal ribosomal protein uS8 family. As to quaternary structure, part of the 30S ribosomal subunit. Contacts proteins S5 and S12.

Its function is as follows. One of the primary rRNA binding proteins, it binds directly to 16S rRNA central domain where it helps coordinate assembly of the platform of the 30S subunit. In Thermotoga maritima (strain ATCC 43589 / DSM 3109 / JCM 10099 / NBRC 100826 / MSB8), this protein is Small ribosomal subunit protein uS8.